A 428-amino-acid chain; its full sequence is tRNA(Ile)-lysidine synthase (428 aa).

28–33 (SGGVDS) is a binding site for ATP.

The protein belongs to the tRNA(Ile)-lysidine synthase family.

It is found in the cytoplasm. It carries out the reaction cytidine(34) in tRNA(Ile2) + L-lysine + ATP = lysidine(34) in tRNA(Ile2) + AMP + diphosphate + H(+). Its function is as follows. Ligates lysine onto the cytidine present at position 34 of the AUA codon-specific tRNA(Ile) that contains the anticodon CAU, in an ATP-dependent manner. Cytidine is converted to lysidine, thus changing the amino acid specificity of the tRNA from methionine to isoleucine. The chain is tRNA(Ile)-lysidine synthase from Streptococcus pyogenes serotype M6 (strain ATCC BAA-946 / MGAS10394).